The following is a 414-amino-acid chain: Serine hydroxymethyltransferase (414 aa).

Residues leucine 118 and 122–124 (GHL) contribute to the (6S)-5,6,7,8-tetrahydrofolate site. The residue at position 227 (lysine 227) is an N6-(pyridoxal phosphate)lysine. Residues glutamate 240 and 350 to 352 (SPF) each bind (6S)-5,6,7,8-tetrahydrofolate.

The protein belongs to the SHMT family. As to quaternary structure, homodimer. Requires pyridoxal 5'-phosphate as cofactor.

Its subcellular location is the cytoplasm. It carries out the reaction (6R)-5,10-methylene-5,6,7,8-tetrahydrofolate + glycine + H2O = (6S)-5,6,7,8-tetrahydrofolate + L-serine. Its pathway is one-carbon metabolism; tetrahydrofolate interconversion. It functions in the pathway amino-acid biosynthesis; glycine biosynthesis; glycine from L-serine: step 1/1. Catalyzes the reversible interconversion of serine and glycine with tetrahydrofolate (THF) serving as the one-carbon carrier. This reaction serves as the major source of one-carbon groups required for the biosynthesis of purines, thymidylate, methionine, and other important biomolecules. Also exhibits THF-independent aldolase activity toward beta-hydroxyamino acids, producing glycine and aldehydes, via a retro-aldol mechanism. The protein is Serine hydroxymethyltransferase of Bacillus thuringiensis (strain Al Hakam).